The primary structure comprises 88 residues: Putative carnobacteriocin-BM1 immunity protein (88 aa).

In terms of biological role, could impart immunity to carnobacteriocin-BM1 to naturally sensitive host strains. The protein is Putative carnobacteriocin-BM1 immunity protein of Carnobacterium maltaromaticum (Carnobacterium piscicola).